The following is a 122-amino-acid chain: Large ribosomal subunit protein uL14c (122 aa).

The protein belongs to the universal ribosomal protein uL14 family. Part of the 50S ribosomal subunit.

It localises to the plastid. Its subcellular location is the chloroplast. Functionally, binds to 23S rRNA. In Adiantum capillus-veneris (Maidenhair fern), this protein is Large ribosomal subunit protein uL14c.